The primary structure comprises 604 residues: MAKESGISLKEIQVLARQWKVGPEKRVPAMPGSPVEVKIQSRSSPPTMPPLPPINPGGPRPVSFTPTALSNGINHSPPTLNGAPSPPQRFSNGPASSTSSALTNQQLPATCGARQLSKLKRFLTTLQQFGNDISPEIGEKVRTLVLALVNSTVTIEEFHCKLQEATNFPLRPFVIPFLKANLPLLQRELLHCARAAKQTPSQYLAQHEHLLLNTSIASPADSSELLMEVHGNGKRPSPERREENSFDRDTIAPEPPAKRVCTISPAPRHSPALTVPLMNPGGQFHPTPPPLQHYTLEDIATSHLYREPNKMLEHREVRDRHHSLGLNGGYQDELVDHRLTEREWADEWKHLDHALNCIMEMVEKTRRSMAVLRRCQESDREELNYWKRRYNENTELRKTGTELVSRQHSPGSADSLSNDSQREFNSRPGTGYVPVEFWKKTEEAVNKVKIQAMSEVQKAVAEAEQKAFEVIATERARMEQTIADVKRQAAEDAFLVINEQEESTENCWNCGRKASETCSGCNIARYCGSFCQHKDWERHHRLCGQNLHGQSPHGQGRPLLPVGRGSSARSADCSVPSPALDKTSATTSRSSTPASVTAIDTNGL.

Residues 25-105 (KRVPAMPGSP…SSTSSALTNQ (81 aa)) form a disordered region. Residue S33 is modified to Phosphoserine. A Glycyl lysine isopeptide (Lys-Gly) (interchain with G-Cter in SUMO2) cross-link involves residue K38. Pro residues predominate over residues 46-59 (PTMPPLPPINPGGP). 2 stretches are compositionally biased toward polar residues: residues 64 to 79 (FTPTALSNGINHSPPT) and 88 to 105 (QRFSNGPASSTSSALTNQ). Residues 107–215 (LPATCGARQL…QHEHLLLNTS (109 aa)) form an interaction with PRDM14 region. The region spanning 113–208 (ARQLSKLKRF…TPSQYLAQHE (96 aa)) is the TAFH domain. Positions 229 to 265 (VHGNGKRPSPERREENSFDRDTIAPEPPAKRVCTISP) are disordered. Positions 236 to 251 (PSPERREENSFDRDTI) are enriched in basic and acidic residues. S264 is subject to Phosphoserine. Residues 331 to 377 (QDELVDHRLTEREWADEWKHLDHALNCIMEMVEKTRRSMAVLRRCQE) form a nervy homology region 2 (NHR2) region. The tract at residues 397 to 427 (RKTGTELVSRQHSPGSADSLSNDSQREFNSR) is disordered. The span at 402–419 (ELVSRQHSPGSADSLSND) shows a compositional bias: polar residues. S409 bears the Phosphoserine mark. The tract at residues 435–484 (VEFWKKTEEAVNKVKIQAMSEVQKAVAEAEQKAFEVIATERARMEQTIAD) is nervy homology region 3 (NHR3). K449 is covalently cross-linked (Glycyl lysine isopeptide (Lys-Gly) (interchain with G-Cter in SUMO2)). Residues 451–491 (QAMSEVQKAVAEAEQKAFEVIATERARMEQTIADVKRQAAE) adopt a coiled-coil conformation. 8 residues coordinate Zn(2+): C507, C510, C518, C521, C527, C531, H539, and C543. The segment at 507 to 543 (CWNCGRKASETCSGCNIARYCGSFCQHKDWERHHRLC) adopts an MYND-type zinc-finger fold. The disordered stretch occupies residues 547–604 (LHGQSPHGQGRPLLPVGRGSSARSADCSVPSPALDKTSATTSRSSTPASVTAIDTNGL). Phosphoserine is present on S577. Residues 583-598 (TSATTSRSSTPASVTA) are compositionally biased toward low complexity.

It belongs to the CBFA2T family. Homooligomer. Homotetramerization is mediated by nervy homology region 2. Can interact with RUNX1T1/CBFA2T1 and CBFA2T3/MTG16; heterotetramerization between members of the CBFA2T family is proposed. Forms a heterooligomer with the AML1-MTG8/ETO fusion protein. Interacts with PRDM14. Interacts with RBPJ, GFI1, TCF4. Interacts with TAL1 and CBFA2T3/MTG16; the heteromer with CBFA2T3/MTG16 may function in repression of TAL1. As to expression, ubiquitously expressed in fetal and adult tissues. Highly expressed in adult brain, heart, lung, kidney, lymph node, appendix, thymus, testis, uterus, small intestine, prostate and thymus.

It localises to the nucleus. Transcriptional corepressor which facilitates transcriptional repression via its association with DNA-binding transcription factors and recruitment of other corepressors and histone-modifying enzymes. Via association with PRDM14 is involved in regulation of embryonic stem cell (ESC) pluripotency. Involved in primordial germ cell (PCG) formation. Stabilizes PRDM14 and OCT4 on chromatin in a homooligomerization-dependent manner. Can repress the expression of MMP7 in a ZBTB33-dependent manner. May function as a complex with the chimeric protein RUNX1/AML1-CBFA2T1/MTG8 (AML1-MTG8/ETO fusion protein) which is produced in acute myeloid leukemia with the chromosomal translocation t(8;21). May thus be involved in the repression of AML1-dependent transcription and the induction of G-CSF/CSF3-dependent cell growth. May be a tumor suppressor gene candidate involved in myeloid tumors with the deletion of the 20q11 region. Through heteromerization with CBFA2T3/MTG16 may be involved in regulation of the proliferation and the differentiation of erythroid progenitors by repressing the expression of TAL1 target genes. Required for the maintenance of the secretory cell lineage in the small intestine. Can inhibit Notch signaling probably by association with RBPJ and may be involved in GFI1-mediated Paneth cell differentiation. The sequence is that of Protein CBFA2T2 (CBFA2T2) from Homo sapiens (Human).